The following is a 235-amino-acid chain: Large ribosomal subunit protein uL1 (235 aa).

Belongs to the universal ribosomal protein uL1 family. In terms of assembly, part of the 50S ribosomal subunit.

Binds directly to 23S rRNA. The L1 stalk is quite mobile in the ribosome, and is involved in E site tRNA release. Functionally, protein L1 is also a translational repressor protein, it controls the translation of the L11 operon by binding to its mRNA. This chain is Large ribosomal subunit protein uL1, found in Prochlorococcus marinus (strain MIT 9313).